We begin with the raw amino-acid sequence, 174 residues long: Putative serine protease 46 (174 aa).

The region spanning 43–174 (VVKGKLVEVG…IGWGTTGKKG (132 aa)) is the Peptidase S1 domain. Cys-68 and Cys-84 are disulfide-bonded. Residues His-83 and Asp-128 each act as charge relay system in the active site.

Belongs to the peptidase S1 family.

The sequence is that of Putative serine protease 46 from Homo sapiens (Human).